The sequence spans 111 residues: V-type proton ATPase subunit G 2 (111 aa).

This sequence belongs to the V-ATPase G subunit family. As to quaternary structure, V-ATPase is a heteromultimeric enzyme composed of a peripheral catalytic V1 complex (components A to H) attached to an integral membrane V0 proton pore complex (components: a, c, c', c'' and d).

Catalytic subunit of the peripheral V1 complex of vacuolar ATPase (V-ATPase). V-ATPase is responsible for acidifying a variety of intracellular compartments in eukaryotic cells. The sequence is that of V-type proton ATPase subunit G 2 (VATG2) from Nicotiana tabacum (Common tobacco).